Here is a 234-residue protein sequence, read N- to C-terminus: MKGKLIVFEGGEGSGKTTQLQRSRQWLESSGWLARLQQTLPTLAKPLLVTREPGGTALGIKLRQLLLNSDPEDVIQSRTELLLFAADRAQHVATRLQPHLEAGGLILCDRFTDSTVAYQGYGRGLSLALIDQLNQIATDGLTSDLTLWLDLDVEMGLERSRQRLQQSGGGLDRIERGEIAFHQRVQQGFRALSQAAPERIVTIDASQPEAMVADKIQRILEEKLWQWYPQVSML.

ATP is bound at residue 10–17 (GGEGSGKT).

It belongs to the thymidylate kinase family.

It carries out the reaction dTMP + ATP = dTDP + ADP. Phosphorylation of dTMP to form dTDP in both de novo and salvage pathways of dTTP synthesis. In Cyanothece sp. (strain PCC 7425 / ATCC 29141), this protein is Thymidylate kinase.